The primary structure comprises 339 residues: Fructose-1,6-bisphosphatase isozyme 2 (339 aa).

Positions 3–10 (DRSPFETD) are important for interaction with ALDOA. AMP is bound by residues Val18 and 28–32 (TGELT). Mg(2+) is bound by residues Asp69 and Glu98. 113–114 (KY) contributes to the AMP binding site. Residues Asp119, Leu121, and Asp122 each coordinate Mg(2+). Asp122 is a binding site for substrate. Arg141 lines the AMP pocket. The Nuclear localization signal signature appears at 204-208 (KKKGK). 213–216 (NEGY) lines the substrate pocket. Residues Tyr216 and Tyr219 each carry the phosphotyrosine modification. Residues 245–249 (YVGSM), Tyr265, and Lys275 contribute to the substrate site. Mg(2+) is bound at residue Glu281.

It belongs to the FBPase class 1 family. As to quaternary structure, homotetramer. Interacts with ALDOA; the interaction blocks inhibition by physiological concentrations of AMP and reduces inhibition by Ca(2+). Interacts with alpha-actinin and F-actin. Requires Mg(2+) as cofactor.

Its subcellular location is the cell junction. It localises to the cytoplasm. The protein localises to the nucleus. It is found in the myofibril. The protein resides in the sarcomere. Its subcellular location is the z line. The catalysed reaction is beta-D-fructose 1,6-bisphosphate + H2O = beta-D-fructose 6-phosphate + phosphate. It participates in carbohydrate biosynthesis; gluconeogenesis. With respect to regulation, subject to complex allosteric regulation. The enzyme can assume an active R-state, or an inactive T-state. Intermediate conformations may exist. AMP acts as an allosteric inhibitor. Fructose 2,6-bisphosphate acts as a competitive inhibitor. Strongly inhibited by Ca(2+). Functionally, catalyzes the hydrolysis of fructose 1,6-bisphosphate to fructose 6-phosphate in the presence of divalent cations and probably participates in glycogen synthesis from carbohydrate precursors, such as lactate. This is Fructose-1,6-bisphosphatase isozyme 2 (FBP2) from Oryctolagus cuniculus (Rabbit).